The following is a 369-amino-acid chain: Chaperone protein DnaJ (369 aa).

In terms of domain architecture, J spans 5 to 70 (DYYEVLGVGR…NKRAAYDQFG (66 aa)). The CR-type zinc-finger motif lies at 128-206 (GAETQIRIPR…CHGAGWVKRQ (79 aa)). Zn(2+) is bound by residues cysteine 141, cysteine 144, cysteine 158, cysteine 161, cysteine 180, cysteine 183, cysteine 194, and cysteine 197. CXXCXGXG motif repeat units follow at residues 141-148 (CDTCHGSG), 158-165 (CPTCNGHG), 180-187 (CSHCQGSG), and 194-201 (CGDCHGAG).

It belongs to the DnaJ family. In terms of assembly, homodimer. It depends on Zn(2+) as a cofactor.

It is found in the cytoplasm. Functionally, participates actively in the response to hyperosmotic and heat shock by preventing the aggregation of stress-denatured proteins and by disaggregating proteins, also in an autonomous, DnaK-independent fashion. Unfolded proteins bind initially to DnaJ; upon interaction with the DnaJ-bound protein, DnaK hydrolyzes its bound ATP, resulting in the formation of a stable complex. GrpE releases ADP from DnaK; ATP binding to DnaK triggers the release of the substrate protein, thus completing the reaction cycle. Several rounds of ATP-dependent interactions between DnaJ, DnaK and GrpE are required for fully efficient folding. Also involved, together with DnaK and GrpE, in the DNA replication of plasmids through activation of initiation proteins. This is Chaperone protein DnaJ from Nitrosomonas europaea (strain ATCC 19718 / CIP 103999 / KCTC 2705 / NBRC 14298).